The primary structure comprises 304 residues: Probable HTH-type transcriptional regulator LgoR (304 aa).

The HTH gntR-type domain occupies 1–70 (MSRSQNLRHN…VGNDYVIARK (70 aa)). A DNA-binding region (H-T-H motif) is located at residues 31–50 (QSALAEMYNISRTTVRHILS).

In terms of biological role, may be a positive transcriptional regulator for lgoD and/or lgoT. Is essential for growth on L-galactonate as the sole carbon source. This is Probable HTH-type transcriptional regulator LgoR (lgoR) from Escherichia coli (strain K12).